We begin with the raw amino-acid sequence, 3135 residues long: Beauvericin nonribosomal cyclodepsipeptide synthetase BEA1 (3135 aa).

Positions 70 to 458 are condensation 1; the sequence is HVAYEISNDI…QRLRGSPDKL (389 aa). The segment at 196-228 is disordered; the sequence is LSNRPYTPESSDPEDDGLSLTPTDGSKTPETEG. Positions 499–896 are adenylation 1; the sequence is SLSPSKVAIC…GRMDSQVKIR (398 aa). The Carrier 1 domain maps to 1021–1097; that stretch reads STTTSSQSKL…GLEAIVNGSA (77 aa). Ser1058 carries the post-translational modification O-(pantetheine 4'-phosphoryl)serine. The segment at 1115–1542 is condensation 2; the sequence is SYSQGRLWFL…NIPISVLPLT (428 aa). Residues 1571–1974 are adenylation 2; that stretch reads FRTQVAAYPD…GRMDTQFKIR (404 aa). Residues 2042–2182 form an S-adenosyl-L-methionine-dependent N-methyltransferase region; it reads MYADIGDIDP…FPSPEYLAQV (141 aa). 2 Carrier domains span residues 2509–2583 and 2603–2677; these read VPIS…REGL and APRT…ESTD. Residues Ser2543 and Ser2637 each carry the O-(pantetheine 4'-phosphoryl)serine modification. Residues 2721–3127 are condensation 3; the sequence is QDMYQSTQMQ…QYFLEEVCNT (407 aa).

Belongs to the NRP synthetase family.

The enzyme catalyses 3 (R)-2-hydroxy-3-methylbutanoate + 3 L-phenylalanine + 3 S-adenosyl-L-methionine + 6 ATP = beauvericin + 6 AMP + 3 S-adenosyl-L-homocysteine + 6 diphosphate + 6 H(+). Functionally, beauvericin nonribosomal cyclodepsipeptide synthetase; part of the gene cluster that mediates the biosynthesis of beauvericin (BEA), a non-ribosomal cyclic hexadepsipeptide that shows antibiotic, antifungal, insecticidal, and cancer cell antiproliferative and antihaptotactic activity. Ketoisovalerate reductase BEA2 catalyzes the NADPH-specific reduction of ketoisovaleric acid to hydroxyisovalerate, a precursor for beauvericin biosynthesis. The nonribosomal cyclodepsipeptide synthetase BEA1 then catalyzes the formation of beauvericin via condensation and cyclization of 3 dipeptidol monomers, each composed of one unit of hydroxyisovalerate and one unit of N-methyl-phenylalanine. The chain is Beauvericin nonribosomal cyclodepsipeptide synthetase BEA1 from Gibberella fujikuroi (strain CBS 195.34 / IMI 58289 / NRRL A-6831) (Bakanae and foot rot disease fungus).